The chain runs to 202 residues: Ribosome maturation factor RimM (202 aa).

The PRC barrel domain occupies 121–202 (ADEYYWVDLI…CITVDWQPDY (82 aa)).

It belongs to the RimM family. In terms of assembly, binds ribosomal protein uS19.

The protein resides in the cytoplasm. An accessory protein needed during the final step in the assembly of 30S ribosomal subunit, possibly for assembly of the head region. Essential for efficient processing of 16S rRNA. May be needed both before and after RbfA during the maturation of 16S rRNA. It has affinity for free ribosomal 30S subunits but not for 70S ribosomes. The polypeptide is Ribosome maturation factor RimM (Polaromonas naphthalenivorans (strain CJ2)).